The following is a 275-amino-acid chain: tRNA pseudouridine synthase A (275 aa).

D55 functions as the Nucleophile in the catalytic mechanism. Y111 is a substrate binding site.

Belongs to the tRNA pseudouridine synthase TruA family.

The catalysed reaction is uridine(38/39/40) in tRNA = pseudouridine(38/39/40) in tRNA. In terms of biological role, formation of pseudouridine at positions 38, 39 and 40 in the anticodon stem and loop of transfer RNAs. This Methanococcoides burtonii (strain DSM 6242 / NBRC 107633 / OCM 468 / ACE-M) protein is tRNA pseudouridine synthase A.